The primary structure comprises 181 residues: Large ribosomal subunit protein uL6 (181 aa).

The protein belongs to the universal ribosomal protein uL6 family. In terms of assembly, part of the 50S ribosomal subunit.

Functionally, this protein binds to the 23S rRNA, and is important in its secondary structure. It is located near the subunit interface in the base of the L7/L12 stalk, and near the tRNA binding site of the peptidyltransferase center. The protein is Large ribosomal subunit protein uL6 of Rhodopirellula baltica (strain DSM 10527 / NCIMB 13988 / SH1).